We begin with the raw amino-acid sequence, 1300 residues long: Serine protease EspP (1300 aa).

A signal peptide spans 1 to 55; it reads MNKIYSLKYSHITGGLIAVSELSGRVSSRATGKKKHKRILALCFLGLLQSSYSFA. The Peptidase S6 domain occupies 57-311; it reads QMDISNFYIR…NQTTIDNLKN (255 aa). Active-site charge relay system residues include H127, D156, and S263. The 267-residue stretch at 1034 to 1300 folds into the Autotransporter domain; that stretch reads DINGEAGAWA…AVNANFRYSF (267 aa).

Post-translationally, cleaved to release the mature protein from the outer membrane.

The protein resides in the periplasm. Its subcellular location is the secreted. It is found in the cell surface. It localises to the cell outer membrane. Serine protease with cytotoxic effect. Disrupts actin cytoskeleton resulting cell detachment in vitro. The polypeptide is Serine protease EspP (espP) (Escherichia coli).